The chain runs to 140 residues: MGRMAHRSHTGTGPSQRQLRVGELIRRTLADVLNRGEIHDPDLNRMSITVGEVRCSPDLKVATVHVMPLGGKDVEEAIALLSKHRGELRHHITRQMTLKYAPDLRFRPDETFDRLDETRRLFSDETVQRDIRGSGDGDED.

This sequence belongs to the RbfA family. In terms of assembly, monomer. Binds 30S ribosomal subunits, but not 50S ribosomal subunits or 70S ribosomes.

Its subcellular location is the cytoplasm. Its function is as follows. One of several proteins that assist in the late maturation steps of the functional core of the 30S ribosomal subunit. Associates with free 30S ribosomal subunits (but not with 30S subunits that are part of 70S ribosomes or polysomes). Required for efficient processing of 16S rRNA. May interact with the 5'-terminal helix region of 16S rRNA. This is Ribosome-binding factor A from Cereibacter sphaeroides (strain ATCC 17025 / ATH 2.4.3) (Rhodobacter sphaeroides).